A 217-amino-acid polypeptide reads, in one-letter code: Large ribosomal subunit protein uL3 (217 aa).

A disordered region spans residues 134-154; it reads DATHGNSLSHRAPGSIGQCQT. Position 153 is an N5-methylglutamine (Q153).

It belongs to the universal ribosomal protein uL3 family. In terms of assembly, part of the 50S ribosomal subunit. Forms a cluster with proteins L14 and L19. In terms of processing, methylated by PrmB.

One of the primary rRNA binding proteins, it binds directly near the 3'-end of the 23S rRNA, where it nucleates assembly of the 50S subunit. The sequence is that of Large ribosomal subunit protein uL3 from Coxiella burnetii (strain Dugway 5J108-111).